Here is a 177-residue protein sequence, read N- to C-terminus: Adenine phosphoribosyltransferase (177 aa).

It belongs to the purine/pyrimidine phosphoribosyltransferase family. As to quaternary structure, homodimer.

It is found in the cytoplasm. The enzyme catalyses AMP + diphosphate = 5-phospho-alpha-D-ribose 1-diphosphate + adenine. It participates in purine metabolism; AMP biosynthesis via salvage pathway; AMP from adenine: step 1/1. Its function is as follows. Catalyzes a salvage reaction resulting in the formation of AMP, that is energically less costly than de novo synthesis. In Rhodococcus opacus (strain B4), this protein is Adenine phosphoribosyltransferase.